A 188-amino-acid chain; its full sequence is Putative manganese efflux pump MntP (188 aa).

Helical transmembrane passes span 3 to 23, 39 to 59, 65 to 85, 104 to 124, 125 to 145, and 167 to 187; these read MITLFGLALALAMDAFAVALG, LGWHFGLFQAMMPIIGWLAGL, IETYDHWVAFGLLVCVGGKMI, GMSLIMLSVATSIDALAVGLS, LAIVGISVWFPALIIGIIAGV, and IAGGLILIGIGLKILWEHTLG.

The protein belongs to the MntP (TC 9.B.29) family.

The protein resides in the cell inner membrane. Functionally, probably functions as a manganese efflux pump. The protein is Putative manganese efflux pump MntP of Syntrophotalea carbinolica (strain DSM 2380 / NBRC 103641 / GraBd1) (Pelobacter carbinolicus).